Here is a 1553-residue protein sequence, read N- to C-terminus: DNA topoisomerase 2-alpha (1553 aa).

Residues 1-25 form a disordered region; that stretch reads MELLDSPAPLRPLHDNPRLPKADGA. The span at 12–25 shows a compositional bias: basic and acidic residues; sequence PLHDNPRLPKADGA. Residues Asn92, Asn121, 149–151, and 162–169 contribute to the ATP site; these read SSN and GRNGYGAK. The interval 343 to 345 is interaction with DNA; that stretch reads KKK. 377-379 lines the ATP pocket; sequence QTK. The region spanning 456-573 is the Toprim domain; the sequence is CTLILTEGDS…SLLRHNFLEE (118 aa). The Mg(2+) site is built by Glu462, Asp542, and Asp544. Positions 716-1163 constitute a Topo IIA-type catalytic domain; sequence IPSLVDGLKP…SPSDLWKEDL (448 aa). The active-site O-(5'-phospho-DNA)-tyrosine intermediate is the Tyr806. Residues 991–1000 form an interaction with DNA region; it reads KLQTNLTCNS. 2 disordered regions span residues 1095-1114 and 1186-1553; these read QNKE…AATG and TGKP…DDMF. Residues 1098 to 1107 are compositionally biased toward acidic residues; the sequence is EEEEGDESGE. Over residues 1242–1262 the composition is skewed to basic and acidic residues; it reads SEKNESDEKQEGNSSGDKEPS. Acidic residues-rich tracts occupy residues 1300–1310 and 1334–1349; these read SESDSESDDFE and SDAD…EYQE. Basic and acidic residues predominate over residues 1371-1385; sequence VPKEKKGKAPKEKPL. Positions 1413–1432 are enriched in low complexity; sequence PRAQAVPKKPAAAKKGSTAK. Positions 1444–1454 are enriched in basic residues; that stretch reads KKKAAPKAPRR. Residues 1517–1532 show a composition bias toward low complexity; that stretch reads SIDLTADSPAAAAPRT.

The protein belongs to the type II topoisomerase family. Homodimer. Mg(2+) is required as a cofactor. Mn(2+) serves as cofactor. Requires Ca(2+) as cofactor.

The protein resides in the cytoplasm. It is found in the nucleus. Its subcellular location is the nucleoplasm. It localises to the nucleolus. It carries out the reaction ATP-dependent breakage, passage and rejoining of double-stranded DNA.. In terms of biological role, key decatenating enzyme that alters DNA topology by binding to two double-stranded DNA molecules, generating a double-stranded break in one of the strands, passing the intact strand through the broken strand, and religating the broken strand. May play a role in the regulation of circadian rhythm. In Gallus gallus (Chicken), this protein is DNA topoisomerase 2-alpha (TOP2A).